The chain runs to 788 residues: Protein translocase subunit SecA 2 (788 aa).

ATP contacts are provided by residues Gln86, 104–108 (GEGKT), and Asp493.

It belongs to the SecA family. Monomer and homodimer. Part of the essential Sec protein translocation apparatus which comprises SecA, SecYEG and auxiliary proteins SecDF. Other proteins may also be involved.

Its subcellular location is the cell membrane. The protein resides in the cytoplasm. It carries out the reaction ATP + H2O + cellular proteinSide 1 = ADP + phosphate + cellular proteinSide 2.. Its function is as follows. Part of the Sec protein translocase complex. Interacts with the SecYEG preprotein conducting channel. Has a central role in coupling the hydrolysis of ATP to the transfer of proteins into and across the cell membrane, serving as an ATP-driven molecular motor driving the stepwise translocation of polypeptide chains across the membrane. This Geobacillus thermodenitrificans (strain NG80-2) protein is Protein translocase subunit SecA 2.